We begin with the raw amino-acid sequence, 675 residues long: Methionine--tRNA ligase (675 aa).

A 'HIGH' region motif is present at residues 15 to 25 (PYANGSIHLGH). Zn(2+)-binding residues include Cys-146, Cys-149, Cys-159, and Cys-162. The 'KMSKS' region signature appears at 332-336 (KMSKS). Lys-335 lines the ATP pocket. The region spanning 573–675 (DFAKVDMRIA…SGAQPGMQVK (103 aa)) is the tRNA-binding domain.

It belongs to the class-I aminoacyl-tRNA synthetase family. MetG type 1 subfamily. Homodimer. Zn(2+) serves as cofactor.

The protein localises to the cytoplasm. The catalysed reaction is tRNA(Met) + L-methionine + ATP = L-methionyl-tRNA(Met) + AMP + diphosphate. Its function is as follows. Is required not only for elongation of protein synthesis but also for the initiation of all mRNA translation through initiator tRNA(fMet) aminoacylation. The polypeptide is Methionine--tRNA ligase (Yersinia pestis bv. Antiqua (strain Angola)).